A 674-amino-acid polypeptide reads, in one-letter code: UvrABC system protein C (674 aa).

One can recognise a GIY-YIG domain in the interval 64 to 142; sequence NGPGVYRMLN…IKRLRPRFNV (79 aa). The UVR domain occupies 252 to 287; sequence QAVKATIASAMAEASENLDFERAALYRDRLAALSHV.

This sequence belongs to the UvrC family. In terms of assembly, interacts with UvrB in an incision complex.

It localises to the cytoplasm. In terms of biological role, the UvrABC repair system catalyzes the recognition and processing of DNA lesions. UvrC both incises the 5' and 3' sides of the lesion. The N-terminal half is responsible for the 3' incision and the C-terminal half is responsible for the 5' incision. The polypeptide is UvrABC system protein C (Rhizobium meliloti (strain 1021) (Ensifer meliloti)).